The primary structure comprises 103 residues: Urease subunit beta (103 aa).

Belongs to the urease beta subunit family. In terms of assembly, heterotrimer of UreA (gamma), UreB (beta) and UreC (alpha) subunits. Three heterotrimers associate to form the active enzyme.

The protein resides in the cytoplasm. It carries out the reaction urea + 2 H2O + H(+) = hydrogencarbonate + 2 NH4(+). Its pathway is nitrogen metabolism; urea degradation; CO(2) and NH(3) from urea (urease route): step 1/1. The chain is Urease subunit beta from Streptomyces coelicolor (strain ATCC BAA-471 / A3(2) / M145).